The primary structure comprises 160 residues: Single-stranded DNA-binding protein 2 (160 aa).

In terms of domain architecture, SSB spans 2-104; it reads MNRVVLVGRL…VVAESVQFLE (103 aa). The segment at 107 to 160 is disordered; the sequence is NNNVEGATSNNYQNKANYSNNNQTSSYRADTSQKSDSFASEGKPIDINEDDLPF. The span at 115–129 shows a compositional bias: low complexity; it reads SNNYQNKANYSNNNQ. The segment covering 130–144 has biased composition (polar residues); that stretch reads TSSYRADTSQKSDSF. The Important for interaction with partner proteins motif lies at 155-160; sequence EDDLPF.

Homotetramer.

Plays an important role in DNA replication, recombination and repair. Binds to ssDNA and to an array of partner proteins to recruit them to their sites of action during DNA metabolism. This is Single-stranded DNA-binding protein 2 (ssb2) from Listeria monocytogenes serovar 1/2a (strain ATCC BAA-679 / EGD-e).